The chain runs to 306 residues: MATH domain and coiled-coil domain-containing protein At3g29580 (306 aa).

The MATH domain occupies 6-132 (DNKFTWVIKN…NGEIKIVVEF (127 aa)). Residues 253-298 (FKLDWLEKKLNEVLEKKEKEESYETRMREIEEEMKDLKAKALDVGA) are a coiled coil.

This is MATH domain and coiled-coil domain-containing protein At3g29580 from Arabidopsis thaliana (Mouse-ear cress).